Here is a 525-residue protein sequence, read N- to C-terminus: GMP synthase [glutamine-hydrolyzing] (525 aa).

In terms of domain architecture, Glutamine amidotransferase type-1 spans 9 to 207 (RILILDFGSQ…VLDICGCAAL (199 aa)). Catalysis depends on C86, which acts as the Nucleophile. Active-site residues include H181 and E183. Residues 208–400 (WTPSNIVDDA…LGLPYDMVYR (193 aa)) form the GMPS ATP-PPase domain. Residue 235–241 (SGGVDSS) participates in ATP binding.

In terms of assembly, homodimer.

It carries out the reaction XMP + L-glutamine + ATP + H2O = GMP + L-glutamate + AMP + diphosphate + 2 H(+). The protein operates within purine metabolism; GMP biosynthesis; GMP from XMP (L-Gln route): step 1/1. Its function is as follows. Catalyzes the synthesis of GMP from XMP. The chain is GMP synthase [glutamine-hydrolyzing] from Pseudomonas aeruginosa (strain UCBPP-PA14).